Reading from the N-terminus, the 287-residue chain is Formamidopyrimidine-DNA glycosylase (287 aa).

The active-site Schiff-base intermediate with DNA is the P2. E3 functions as the Proton donor in the catalytic mechanism. K58 (proton donor; for beta-elimination activity) is an active-site residue. 3 residues coordinate DNA: H104, R123, and R166. The FPG-type zinc finger occupies 251-287 (RTYDREGQPCRNDGCRGVIGREVQAGRSTFYCPVCQR). R277 serves as the catalytic Proton donor; for delta-elimination activity.

The protein belongs to the FPG family. As to quaternary structure, monomer. Zn(2+) serves as cofactor.

It catalyses the reaction Hydrolysis of DNA containing ring-opened 7-methylguanine residues, releasing 2,6-diamino-4-hydroxy-5-(N-methyl)formamidopyrimidine.. It carries out the reaction 2'-deoxyribonucleotide-(2'-deoxyribose 5'-phosphate)-2'-deoxyribonucleotide-DNA = a 3'-end 2'-deoxyribonucleotide-(2,3-dehydro-2,3-deoxyribose 5'-phosphate)-DNA + a 5'-end 5'-phospho-2'-deoxyribonucleoside-DNA + H(+). Its function is as follows. Involved in base excision repair of DNA damaged by oxidation or by mutagenic agents. Acts as a DNA glycosylase that recognizes and removes damaged bases. Has a preference for oxidized purines, such as 7,8-dihydro-8-oxoguanine (8-oxoG). Has AP (apurinic/apyrimidinic) lyase activity and introduces nicks in the DNA strand. Cleaves the DNA backbone by beta-delta elimination to generate a single-strand break at the site of the removed base with both 3'- and 5'-phosphates. This is Formamidopyrimidine-DNA glycosylase from Phenylobacterium zucineum (strain HLK1).